Reading from the N-terminus, the 790-residue chain is Cadherin-6 (790 aa).

Positions 1-18 are cleaved as a signal peptide; that stretch reads MRTYRYFLLLFWVGQPYP. Positions 19–53 are excised as a propeptide; that stretch reads TFSNPLSKRTSGFPAKRKALELSANSRNELSRSKR. 5 consecutive Cadherin domains span residues 54–159, 160–268, 269–383, 384–486, and 487–608; these read SWMW…EPIF, TKDV…PPRF, PQST…PPVF, SKLA…DNAP, and EFAE…LIHP. The Extracellular portion of the chain corresponds to 54 to 615; that stretch reads SWMWNQFFLL…IHPTGLSTGA (562 aa). N-linked (GlcNAc...) asparagine glycosylation is present at N255. The segment at 260–291 is disordered; it reads DVNDNPPRFPQSTYQFKTPESSPPGTPIGRIK. The segment covering 269 to 279 has biased composition (polar residues); that stretch reads PQSTYQFKTPE. N-linked (GlcNAc...) asparagine glycans are attached at residues N399, N437, N455, and N536. Residues 616 to 636 form a helical membrane-spanning segment; the sequence is LVAILLCIVILLVTVVLFAAL. The Cytoplasmic portion of the chain corresponds to 637–790; it reads RRQRKKEPLI…YGGMDSDKDS (154 aa). S786 and S790 each carry phosphoserine.

Its subcellular location is the cell membrane. Its function is as follows. Cadherins are calcium-dependent cell adhesion proteins. They preferentially interact with themselves in a homophilic manner in connecting cells; cadherins may thus contribute to the sorting of heterogeneous cell types. This is Cadherin-6 (Cdh6) from Mus musculus (Mouse).